Consider the following 244-residue polypeptide: 2-C-methyl-D-erythritol 4-phosphate cytidylyltransferase (244 aa).

This sequence belongs to the IspD/TarI cytidylyltransferase family. IspD subfamily.

The catalysed reaction is 2-C-methyl-D-erythritol 4-phosphate + CTP + H(+) = 4-CDP-2-C-methyl-D-erythritol + diphosphate. It participates in isoprenoid biosynthesis; isopentenyl diphosphate biosynthesis via DXP pathway; isopentenyl diphosphate from 1-deoxy-D-xylulose 5-phosphate: step 2/6. Its function is as follows. Catalyzes the formation of 4-diphosphocytidyl-2-C-methyl-D-erythritol from CTP and 2-C-methyl-D-erythritol 4-phosphate (MEP). This chain is 2-C-methyl-D-erythritol 4-phosphate cytidylyltransferase, found in Solibacter usitatus (strain Ellin6076).